The chain runs to 691 residues: DNA ligase (691 aa).

NAD(+)-binding positions include 41 to 45, 90 to 91, and Glu130; these read DAEYD and SL. Lys132 serves as the catalytic N6-AMP-lysine intermediate. Arg153, Glu190, Lys307, and Lys331 together coordinate NAD(+). Cys425, Cys428, Cys443, and Cys449 together coordinate Zn(2+). The BRCT domain occupies 610 to 691; that stretch reads APQGVLAGKT…MHTLLEGHAR (82 aa).

Belongs to the NAD-dependent DNA ligase family. LigA subfamily. The cofactor is Mg(2+). It depends on Mn(2+) as a cofactor.

The catalysed reaction is NAD(+) + (deoxyribonucleotide)n-3'-hydroxyl + 5'-phospho-(deoxyribonucleotide)m = (deoxyribonucleotide)n+m + AMP + beta-nicotinamide D-nucleotide.. Functionally, DNA ligase that catalyzes the formation of phosphodiester linkages between 5'-phosphoryl and 3'-hydroxyl groups in double-stranded DNA using NAD as a coenzyme and as the energy source for the reaction. It is essential for DNA replication and repair of damaged DNA. This chain is DNA ligase, found in Burkholderia pseudomallei (strain 1106a).